Reading from the N-terminus, the 190-residue chain is Mitochondrial inner membrane protease subunit 1 (190 aa).

Residues Ser40 and Lys84 contribute to the active site.

This sequence belongs to the peptidase S26 family. IMP1 subfamily. Component of the mitochondrial inner membrane peptidase (IMP) complex which at least consists of IMP1, IMP2 and SOM1.

It localises to the mitochondrion inner membrane. In terms of biological role, catalytic component of the mitochondrial inner membrane peptidase (IMP) complex. IMP catalyzes the removal of signal peptides required for the targeting of proteins from the mitochondrial matrix, across the inner membrane, into the inter-membrane space. The two catalytic IMP subunits seem to have non-overlapping substrate specificities. IMP1 substrates include nuclear encoded CYB2, mitochondrially encoded COX2, NADH-cytochrome b5 reductase and GUT2. The sequence is that of Mitochondrial inner membrane protease subunit 1 (IMP1) from Saccharomyces cerevisiae (strain ATCC 204508 / S288c) (Baker's yeast).